A 913-amino-acid chain; its full sequence is MFAPLLKKLFGSKNEREVKRMLKTVQIVNAFEEQMVALSDEQLRAKTEEFKARIAKGETLDQLLPEAFAVAREAGKRVMGMRHFDVQLIGGMTLHEGQIAEMRTGEGKTLVGTLAVYLNALSGKGVHVVTVNDYLARRDANWMRPLYEFLGLTVGIVTPFQPPEEKRAAYAADITYGTNNEYGFDYLRDNMAFSMDDKFQRELNFAVIDEVDSILIDEARTPLIISGQAEDSSKLYTEINRLIPKLEQHIEEVEGEVTKPGHFTVDEKTRQVELNEAGHQFIEEMLTEVGLLAEGESLYSAHNLGLLTHVYAGLRAHKLFNRNVEYIVADGQVLLVDEHTGRTMPGRRLSEGLHQAIEAKENLNIQAESQTLASTTFQNYFRLYNKLSGMTGTADTEAFEFHQIYNLAVMVIPPNKPLARKDFNDLVYLTAEEKYAAIVTDIKACIAENRPVLVGTATIETSEHMSNLLKQEGIDHKVLNAKFHEKEAEIIAQAGRPGALTIATNMAGRGTDILLGGNWEVEVANLEDPTPEQIAQIKADWQKRHQQVIEAGGLHVIASERHESRRIDNQLRGRAGRQGDTGSSRFYLSLEDSLMRIFASDRVKNFMKALGMQSGEAIEHRMVTNAIEKAQRKVEGRNFDIRKQLLEFDDVANEQRKVIYHMRNTLLAAENIGETIADFREEVLNNLISQHIPPQSLPEQWNVAGLEAALNTDFAVKLPVQQWLDEDDNLHEDSLREKIMAQLLVAYNEKEDQASAEALRSFEKQILLRVLDDLWKDHLSTMDHLRHGIHLRGYAQKNPKQEYKRESFTLFQELLDSIKRDTIRVLSHVQVRREDPEEEEARLRQEAEELASRMQFEHAPAPGIDQPLLDEEGGEAPVAVASEPVRNDQKLGRNELCWCGSGKKFKHCHGQIN.

Residues glutamine 87, 105–109 (GEGKT), and aspartate 512 contribute to the ATP site. The Zn(2+) site is built by cysteine 897, cysteine 899, cysteine 908, and histidine 909.

Belongs to the SecA family. Monomer and homodimer. Part of the essential Sec protein translocation apparatus which comprises SecA, SecYEG and auxiliary proteins SecDF-YajC and YidC. It depends on Zn(2+) as a cofactor.

The protein localises to the cell inner membrane. It is found in the cytoplasm. It carries out the reaction ATP + H2O + cellular proteinSide 1 = ADP + phosphate + cellular proteinSide 2.. Functionally, part of the Sec protein translocase complex. Interacts with the SecYEG preprotein conducting channel. Has a central role in coupling the hydrolysis of ATP to the transfer of proteins into and across the cell membrane, serving both as a receptor for the preprotein-SecB complex and as an ATP-driven molecular motor driving the stepwise translocation of polypeptide chains across the membrane. The polypeptide is Protein translocase subunit SecA (Pseudomonas savastanoi pv. phaseolicola (strain 1448A / Race 6) (Pseudomonas syringae pv. phaseolicola (strain 1448A / Race 6))).